The primary structure comprises 313 residues: tRNA dimethylallyltransferase (313 aa).

Residue 9–16 coordinates ATP; that stretch reads GPTATGKS. A substrate-binding site is contributed by 11 to 16; the sequence is TATGKS.

Belongs to the IPP transferase family. In terms of assembly, monomer. Mg(2+) is required as a cofactor.

It carries out the reaction adenosine(37) in tRNA + dimethylallyl diphosphate = N(6)-dimethylallyladenosine(37) in tRNA + diphosphate. In terms of biological role, catalyzes the transfer of a dimethylallyl group onto the adenine at position 37 in tRNAs that read codons beginning with uridine, leading to the formation of N6-(dimethylallyl)adenosine (i(6)A). In Mycobacteroides abscessus (strain ATCC 19977 / DSM 44196 / CCUG 20993 / CIP 104536 / JCM 13569 / NCTC 13031 / TMC 1543 / L948) (Mycobacterium abscessus), this protein is tRNA dimethylallyltransferase.